The following is a 213-amino-acid chain: Transmembrane emp24 domain-containing protein p24delta8 (213 aa).

Residues 1-22 (MDLCRSSILLLIIALLSPRTLS) form the signal peptide. Residues 23–180 (MRYELKSSKT…QELNRSTNSK (158 aa)) are Lumenal-facing. The region spanning 32–148 (TKCIGEEIHE…VDMMEYQVKT (117 aa)) is the GOLD domain. An N-linked (GlcNAc...) asparagine glycan is attached at N97. Residues 163–176 (LREREEEMQELNRS) are a coiled coil. An Omega-N-methylated arginine modification is found at R166. Residue N174 is glycosylated (N-linked (GlcNAc...) asparagine). Residues 181–203 (MAWLSFGSLVVCLSVAGLQFWHL) form a helical membrane-spanning segment. An interaction with ARF1 region spans residues 202–213 (HLKTFFEKKKLI). Topologically, residues 204 to 213 (KTFFEKKKLI) are cytoplasmic. Residues 206–207 (FF) carry the COPII vesicle coat-binding motif. Residues 206–213 (FFEKKKLI) carry the COPI vesicle coat-binding motif.

Belongs to the EMP24/GP25L family. In terms of assembly, probably oligomerizes with other members of the EMP24/GP25L family. Associates with the COPI vesicle coat (coatomer). Associates with the COPII vesicle coat (coatomer). Interacts with ARF1 (GDP-bound).

The protein localises to the endoplasmic reticulum membrane. It localises to the golgi apparatus. Its subcellular location is the cis-Golgi network membrane. It is found in the golgi stack membrane. Involved in vesicular protein trafficking. Mainly functions in the early secretory pathway. Thought to act as cargo receptor at the lumenal side for incorporation of secretory cargo molecules into transport vesicles and to be involved in vesicle coat formation at the cytoplasmic side. On Golgi membranes, acts as a primary receptor for ARF1-GDP which is involved in COPI-vesicle formation. The polypeptide is Transmembrane emp24 domain-containing protein p24delta8 (Arabidopsis thaliana (Mouse-ear cress)).